The primary structure comprises 174 residues: Major allergen Can f 1 (174 aa).

The signal sequence occupies residues 1 to 18; that stretch reads MKTLLLTIGFSLIAILQA. An intrachain disulfide couples Cys78 to Cys169. Asn80 carries an N-linked (GlcNAc...) asparagine glycan.

It belongs to the calycin superfamily. Lipocalin family. As to expression, tongue epithelial tissue.

The protein localises to the secreted. This Canis lupus familiaris (Dog) protein is Major allergen Can f 1.